We begin with the raw amino-acid sequence, 228 residues long: Large ribosomal subunit protein uL3 (228 aa).

The tract at residues 135–159 (MKSQRASHGNSRSHNVPGSIGMAQD) is disordered. Residues 140-150 (ASHGNSRSHNV) are compositionally biased toward polar residues. Q158 bears the N5-methylglutamine mark.

Belongs to the universal ribosomal protein uL3 family. Part of the 50S ribosomal subunit. Forms a cluster with proteins L14 and L19. Post-translationally, methylated by PrmB.

Its function is as follows. One of the primary rRNA binding proteins, it binds directly near the 3'-end of the 23S rRNA, where it nucleates assembly of the 50S subunit. The chain is Large ribosomal subunit protein uL3 from Albidiferax ferrireducens (strain ATCC BAA-621 / DSM 15236 / T118) (Rhodoferax ferrireducens).